A 725-amino-acid polypeptide reads, in one-letter code: Antigen peptide transporter 1 (725 aa).

Topologically, residues 1–8 are cytoplasmic; sequence MAAHAWPT. Residues 9–29 traverse the membrane as a helical segment; the sequence is AALLLLLVDWLLLRPVLPGIF. The Lumenal segment spans residues 30–38; sequence SLLVPEVPL. The helical transmembrane segment at 39–60 threads the bilayer; the sequence is LRVWAVGLSRWAILGLGVRGVL. At 61–67 the chain is on the cytoplasmic side; sequence GVTAGAR. Residues 68-88 traverse the membrane as a helical segment; it reads GWLAALQPLVAALGLALPGLA. Over 89-110 the chain is Lumenal; the sequence is SFRKLSAWGALREGDNAGLLHW. The chain crosses the membrane as a helical span at residues 111-131; that stretch reads NSRLDAFVLSYVAALPAAALW. Residues 132–163 are Cytoplasmic-facing; sequence HKLGGFWAPSGHKGAGDMLCRMLGFLDSKKGR. Residues 164 to 184 form a helical membrane-spanning segment; that stretch reads LHLVLVLLILSCLGEMAIPFF. An ABC transmembrane type-1 domain is found at 164–447; the sequence is LHLVLVLLIL…LLSIYPSMQK (284 aa). Residues 185–204 are Lumenal-facing; sequence TGRITDWILQDKTAPSFARN. Residues 205–225 traverse the membrane as a helical segment; the sequence is MWLMCILTIASTVLEFAGDGI. The Cytoplasmic segment spans residues 226 to 275; the sequence is YNITMGHMHSRVHGEVFRAVLHQETGFFLKNPTGSITSRVTEDTSNVCES. A helical membrane pass occupies residues 276 to 296; that stretch reads ISDKLNLFLWYLGRGLCLLAF. Residues 297-305 lie on the Lumenal side of the membrane; the sequence is MIWGSFYLT. Residues 306-326 form a helical membrane-spanning segment; sequence VVTLLSLPLLFLLPRRLGKVY. Topologically, residues 327–395 are cytoplasmic; it reads QSLAVKVQES…VTEVWTMSVS (69 aa). A part of the peptide-binding site region spans residues 352–397; it reads PTVRSFANEEGEAQKFRQKLEEMKPLNKKEALAYVTEVWTMSVSGM. A helical membrane pass occupies residues 396-416; the sequence is GMLLKVGILYLGGQLVVRGAV. Residues 417–420 are Lumenal-facing; the sequence is SSGN. Residues 421–441 traverse the membrane as a helical segment; it reads LVSFVLYQLQFTRAVEVLLSI. Positions 430-464 are part of the peptide-binding site; it reads QFTRAVEVLLSIYPSMQKSVGASEKIFEYLDRTPC. At 442–725 the chain is on the cytoplasmic side; the sequence is YPSMQKSVGA…MVEALAAPSD (284 aa). Residues 480-719 form the ABC transporter domain; sequence VKFQDVSFAY…GGCYRSMVEA (240 aa). Residues 515–523, 618–624, and glutamine 678 each bind ATP; these read GPNGSGKST and NQLSGGQ. Serine 522 is a Mg(2+) binding site.

The protein belongs to the ABC transporter superfamily. ABCB family. MHC peptide exporter (TC 3.A.1.209) subfamily. Heterodimer of TAP1 and TAP2 (TAP1-TAP2). A component of the peptide loading complex (PLC), interacts via TAPBP with MHCI heterodimer; this interaction mediates peptide-MHCI assembly. Interacts with PSMB5 and PSMB8. Requires Mg(2+) as cofactor.

The protein localises to the endoplasmic reticulum membrane. The catalysed reaction is a peptide antigen(in) + ATP + H2O = a peptide antigen(out) + ADP + phosphate + H(+). Its function is as follows. ABC transporter associated with antigen processing. In complex with TAP2 mediates unidirectional translocation of peptide antigens from cytosol to endoplasmic reticulum (ER) for loading onto MHC class I (MHCI) molecules. Uses the chemical energy of ATP to export peptides against the concentration gradient. During the transport cycle alternates between 'inward-facing' state with peptide binding site facing the cytosol to 'outward-facing' state with peptide binding site facing the ER lumen. Peptide antigen binding to ATP-loaded TAP1-TAP2 induces a switch to hydrolysis-competent 'outward-facing' conformation ready for peptide loading onto nascent MHCI molecules. Subsequently ATP hydrolysis resets the transporter to the 'inward facing' state for a new cycle. As a component of the peptide loading complex (PLC), acts as a molecular scaffold essential for peptide-MHCI assembly and antigen presentation. The protein is Antigen peptide transporter 1 (Tap1) of Rattus norvegicus (Rat).